The following is a 272-amino-acid chain: Phosphatidylglycerol--prolipoprotein diacylglyceryl transferase (272 aa).

A run of 4 helical transmembrane segments spans residues 24–44 (WYGI…KWIA), 59–79 (YFIW…ILFY), 102–122 (FIGI…IASF), and 129–149 (GVKF…GYVF). Residue R151 participates in a 1,2-diacyl-sn-glycero-3-phospho-(1'-sn-glycerol) binding. The next 3 helical transmembrane spans lie at 180–200 (PSQL…LYAW), 208–228 (GQLG…AEFW), and 244–264 (MGQL…GYLA).

It belongs to the Lgt family.

It localises to the cell inner membrane. The catalysed reaction is L-cysteinyl-[prolipoprotein] + a 1,2-diacyl-sn-glycero-3-phospho-(1'-sn-glycerol) = an S-1,2-diacyl-sn-glyceryl-L-cysteinyl-[prolipoprotein] + sn-glycerol 1-phosphate + H(+). Its pathway is protein modification; lipoprotein biosynthesis (diacylglyceryl transfer). In terms of biological role, catalyzes the transfer of the diacylglyceryl group from phosphatidylglycerol to the sulfhydryl group of the N-terminal cysteine of a prolipoprotein, the first step in the formation of mature lipoproteins. The sequence is that of Phosphatidylglycerol--prolipoprotein diacylglyceryl transferase from Wolinella succinogenes (strain ATCC 29543 / DSM 1740 / CCUG 13145 / JCM 31913 / LMG 7466 / NCTC 11488 / FDC 602W) (Vibrio succinogenes).